Reading from the N-terminus, the 210-residue chain is Cell division protein FtsQ (210 aa).

The POTRA domain occupies 1–58; that stretch reads LQTSEIEVFQLLGLDGSTSLIALDIDAARRKLVQLPWVEDVDIRKVYPKTVEVRLKER. A helical membrane pass occupies residues 8–25; the sequence is VFQLLGLDGSTSLIALDI.

This sequence belongs to the FtsQ/DivIB family. FtsQ subfamily.

It is found in the cell inner membrane. Essential cell division protein. In Rhizobium radiobacter (Agrobacterium tumefaciens), this protein is Cell division protein FtsQ.